The following is a 124-amino-acid chain: Small ribosomal subunit protein uS12 (124 aa).

The interval 1 to 24 (MPTINQLIKKPRKSQKEKTASPAL) is disordered. Position 89 is a 3-methylthioaspartic acid (D89).

The protein belongs to the universal ribosomal protein uS12 family. As to quaternary structure, part of the 30S ribosomal subunit. Contacts proteins S8 and S17. May interact with IF1 in the 30S initiation complex.

With S4 and S5 plays an important role in translational accuracy. Functionally, interacts with and stabilizes bases of the 16S rRNA that are involved in tRNA selection in the A site and with the mRNA backbone. Located at the interface of the 30S and 50S subunits, it traverses the body of the 30S subunit contacting proteins on the other side and probably holding the rRNA structure together. The combined cluster of proteins S8, S12 and S17 appears to hold together the shoulder and platform of the 30S subunit. This Borrelia hermsii (strain HS1 / DAH) protein is Small ribosomal subunit protein uS12.